The sequence spans 315 residues: Methionyl-tRNA formyltransferase (315 aa).

Serine 114 to proline 117 serves as a coordination point for (6S)-5,6,7,8-tetrahydrofolate.

Belongs to the Fmt family.

It catalyses the reaction L-methionyl-tRNA(fMet) + (6R)-10-formyltetrahydrofolate = N-formyl-L-methionyl-tRNA(fMet) + (6S)-5,6,7,8-tetrahydrofolate + H(+). Attaches a formyl group to the free amino group of methionyl-tRNA(fMet). The formyl group appears to play a dual role in the initiator identity of N-formylmethionyl-tRNA by promoting its recognition by IF2 and preventing the misappropriation of this tRNA by the elongation apparatus. This is Methionyl-tRNA formyltransferase from Corynebacterium efficiens (strain DSM 44549 / YS-314 / AJ 12310 / JCM 11189 / NBRC 100395).